The chain runs to 621 residues: Ubiquitin carboxyl-terminal hydrolase MINDY-2 (621 aa).

2 disordered regions span residues 1-106 (MESS…RGQY) and 119-179 (VGHE…LESF). A Phosphoserine modification is found at S94. Residues 145–163 (AAGSEEPSSAGGLSSSCSD) show a composition bias toward low complexity. C266 (nucleophile) is an active-site residue. H448 acts as the Proton acceptor in catalysis. Residues 507–559 (GQQDQIDQDYLMALSLQQEQQSQEINWEQIPEGISDLELAKKLQEEEDRRASQ) are ubiquitin-binding domain (UBD). The disordered stretch occupies residues 556–621 (RASQYYQEQE…EKEKNSCVIL (66 aa)). Over residues 558-591 (SQYYQEQEQAAAAAAAASTQAQQGQPAQASPSSG) the composition is skewed to low complexity. Basic and acidic residues predominate over residues 597 to 621 (SERKRKEPREKDKEKEKEKNSCVIL).

This sequence belongs to the MINDY deubiquitinase family. FAM63 subfamily.

The catalysed reaction is Thiol-dependent hydrolysis of ester, thioester, amide, peptide and isopeptide bonds formed by the C-terminal Gly of ubiquitin (a 76-residue protein attached to proteins as an intracellular targeting signal).. In terms of biological role, hydrolase that can remove 'Lys-48'-linked conjugated ubiquitin from proteins. Binds to polyubiquitin chains of different linkage types, including 'Lys-6', 'Lys-11', 'Lys-29', 'Lys-33', 'Lys-48' and 'Lys-63'. May play a regulatory role at the level of protein turnover. The sequence is that of Ubiquitin carboxyl-terminal hydrolase MINDY-2 from Homo sapiens (Human).